We begin with the raw amino-acid sequence, 186 residues long: Tumor necrosis factor alpha-induced protein 8-like protein 1 (186 aa).

It belongs to the TNFAIP8 family. As to quaternary structure, interacts with FBXW5; TNFAIP8L1 competes with TSC2 to bind FBXW5 increasing TSC2 stability by preventing its ubiquitination.

The protein resides in the cytoplasm. Functionally, acts as a negative regulator of mTOR activity. This chain is Tumor necrosis factor alpha-induced protein 8-like protein 1 (TNFAIP8L1), found in Bos taurus (Bovine).